The chain runs to 182 residues: Small ribosomal subunit protein uS4c (182 aa).

The S4 RNA-binding domain maps to 82-143; that stretch reads MRLDNILFRL…KERSKVLIQN (62 aa).

This sequence belongs to the universal ribosomal protein uS4 family. As to quaternary structure, part of the 30S ribosomal subunit. Contacts protein S5. The interaction surface between S4 and S5 is involved in control of translational fidelity.

It localises to the plastid. Its subcellular location is the chloroplast. Its function is as follows. One of the primary rRNA binding proteins, it binds directly to 16S rRNA where it nucleates assembly of the body of the 30S subunit. With S5 and S12 plays an important role in translational accuracy. The polypeptide is Small ribosomal subunit protein uS4c (rps4) (Alophia veracruzana (Mexican pine woods lily)).